Here is a 102-residue protein sequence, read N- to C-terminus: Heat shock protein HspQ (102 aa).

It belongs to the HspQ family.

The protein localises to the cytoplasm. Functionally, involved in the degradation of certain denaturated proteins, including DnaA, during heat shock stress. The polypeptide is Heat shock protein HspQ (Pectobacterium atrosepticum (strain SCRI 1043 / ATCC BAA-672) (Erwinia carotovora subsp. atroseptica)).